The primary structure comprises 608 residues: 65-kDa microtubule-associated protein 6 (608 aa).

3 coiled-coil regions span residues 164-186 (DLTLRNLNEYQTHLRTLQKEKSD), 368-388 (ELLANIEMQINKIKDEAQSRK), and 467-503 (VRLVNILEDYKLTRKQQEEEKKRYRDQKKRQDLLLTQ). A disordered region spans residues 501 to 565 (LTQRESIYGS…RSYSGHHRQN (65 aa)). Positions 510–523 (SKPSPRRSSSFRKP) are enriched in low complexity. Phosphoserine is present on serine 513. The span at 526–535 (FNISNGNGSV) shows a compositional bias: polar residues. Serine 604 is modified (phosphoserine).

The protein belongs to the MAP65/ASE1 family. Forms a dimer. Binds to polymerized centrally located endocytic MT.

The protein resides in the nucleus. The protein localises to the cytoplasm. It localises to the mitochondrion. Its subcellular location is the cytoskeleton. It is found in the phragmoplast. Microtubule-associated protein that mediates the formation of a mesh-like stable and dense network formed by individual microtubules (MT). Confers MT resistance to high concentration of NaCl. The protein is 65-kDa microtubule-associated protein 6 (MAP65-6) of Arabidopsis thaliana (Mouse-ear cress).